The chain runs to 160 residues: Invasion protein IagB (160 aa).

The N-terminal stretch at 1-19 (MHYFFIIVIWLLSINTAWA) is a signal peptide.

Belongs to the IagB/IpgF/P19 family.

The polypeptide is Invasion protein IagB (iagB) (Salmonella typhi).